A 406-amino-acid polypeptide reads, in one-letter code: Glucose-1-phosphate adenylyltransferase (406 aa).

Alpha-D-glucose 1-phosphate is bound by residues tyrosine 100, glycine 165, glutamate 181–lysine 182, and serine 199.

This sequence belongs to the bacterial/plant glucose-1-phosphate adenylyltransferase family. Homotetramer.

The catalysed reaction is alpha-D-glucose 1-phosphate + ATP + H(+) = ADP-alpha-D-glucose + diphosphate. Its pathway is glycan biosynthesis; glycogen biosynthesis. Its function is as follows. Involved in the biosynthesis of ADP-glucose, a building block required for the elongation reactions to produce glycogen. Catalyzes the reaction between ATP and alpha-D-glucose 1-phosphate (G1P) to produce pyrophosphate and ADP-Glc. This is Glucose-1-phosphate adenylyltransferase from Streptomyces avermitilis (strain ATCC 31267 / DSM 46492 / JCM 5070 / NBRC 14893 / NCIMB 12804 / NRRL 8165 / MA-4680).